We begin with the raw amino-acid sequence, 590 residues long: uncharacterized protein (590 aa).

The tract at residues isoleucine 330 to glutamate 368 is disordered. Residues aspartate 336–glutamate 368 are compositionally biased toward acidic residues.

This sequence belongs to the mimivirus L5 family.

This is an uncharacterized protein from Acanthamoeba polyphaga mimivirus (APMV).